The following is a 378-amino-acid chain: Transmembrane 6 superfamily member 2 (378 aa).

The next 9 membrane-spanning stretches (helical) occupy residues 34–54 (LCVV…VYSL), 63–83 (PLYA…VIAL), 110–130 (IFIC…MAGA), 140–160 (LGLY…PGNI), 170–190 (PTFF…MRIF), 219–239 (LTLI…GLVV), 269–289 (MLMY…ALTF), 291–311 (GCSW…QAQF), and 332–352 (TWAT…LLAL). EXPERA domains lie at 61 to 186 (YDPL…CWAG) and 217 to 351 (ADLT…HLLA).

Belongs to the TM6SF family.

It localises to the endoplasmic reticulum membrane. The protein resides in the endoplasmic reticulum-Golgi intermediate compartment membrane. Functionally, regulator of liver fat metabolism influencing triglyceride secretion and hepatic lipid droplet content. May function as sterol isomerase. In Rattus norvegicus (Rat), this protein is Transmembrane 6 superfamily member 2 (Tm6sf2).